The chain runs to 387 residues: Phosphoglycerate kinase (387 aa).

Substrate-binding positions include 21 to 23 (DLN), R36, 59 to 62 (HLGR), R113, and R146. ATP contacts are provided by residues K197, E314, and 340 to 343 (GGDT).

The protein belongs to the phosphoglycerate kinase family. As to quaternary structure, monomer.

The protein localises to the cytoplasm. The enzyme catalyses (2R)-3-phosphoglycerate + ATP = (2R)-3-phospho-glyceroyl phosphate + ADP. The protein operates within carbohydrate degradation; glycolysis; pyruvate from D-glyceraldehyde 3-phosphate: step 2/5. This Klebsiella pneumoniae (strain 342) protein is Phosphoglycerate kinase.